The sequence spans 136 residues: Large-conductance mechanosensitive channel (136 aa).

The next 4 helical transmembrane spans lie at 9–29 (AFAS…GAAF), 32–52 (IVSS…LGGV), 54–74 (FSDL…VVIA), and 79–99 (IQTV…LKAI).

Belongs to the MscL family. In terms of assembly, homopentamer.

It is found in the cell inner membrane. In terms of biological role, channel that opens in response to stretch forces in the membrane lipid bilayer. May participate in the regulation of osmotic pressure changes within the cell. The protein is Large-conductance mechanosensitive channel of Shewanella oneidensis (strain ATCC 700550 / JCM 31522 / CIP 106686 / LMG 19005 / NCIMB 14063 / MR-1).